Reading from the N-terminus, the 635-residue chain is MRTRLNFLLLCIASVLSVIWIGVLLTWNDNNLGGISLNGGKDSAYDDLLSLGSFNDMEVDSYVTNIYDNAPVLGCTDLSYHGLLKVTPKHDLACDLEFIRAQILDIDVYSAIKDLEDKALTVKQKVEKHWFTFYGSSVFLPEHDVHYLVRRVIFSAEGKANSPVTSIIVAQIYDKNWNELNGHFLDILNPNTGKVQHNTFPQVLPIATNFVKGKKFRGAEDPRVVLRKGRFGPDPLVMFNSLTQDNKRRRIFTISPFDQFKTVMYDIKDYEMPRYEKNWVPFFLKDNQEAVHFVYSFNPLRVLKCSLDDGSCDIVFEIPKVDSMSSELRGATPMINLPQAIPMAKDKEIWVSFPRTRIANCGCSRTTYRPMLMLFVREGSNFFVELLSTSLDFGLEVLPYSGNGLPCSADHSVLIPNSIDNWEVVDSNGDDILTLSFSEADKSTSVIHIRGLYNYLSELDGYQGPEAEDEHNFQRILSDLHFDNKTTVNNFIKVQSCALDAAKGYCKEYGLTRGEAERRRRVAEERKKKEKEEEEKKKKKEKEEEEKKRIEEEKKKIEEKERKEKEKEEAERKKLQEMKKKLEEITEKLEKGQRNKEIDPKEKQREEEERKERVRKIAEKQRKEAEKKEAEKKGK.

The Cytoplasmic segment spans residues 1–6 (MRTRLN). The chain crosses the membrane as a helical span at residues 7-27 (FLLLCIASVLSVIWIGVLLTW). Residues 28-635 (NDNNLGGISL…EKKEAEKKGK (608 aa)) are Extracellular-facing. Asn-484 carries N-linked (GlcNAc...) asparagine glycosylation. Positions 512 to 635 (TRGEAERRRR…EKKEAEKKGK (124 aa)) form a coiled coil. The interval 517-635 (ERRRRVAEER…EKKEAEKKGK (119 aa)) is disordered.

This sequence belongs to the BMT family.

The protein resides in the membrane. In terms of biological role, beta-mannosyltransferase involved in cell wall biosynthesis. Initiates the beta-mannosylation of core N-linked glycans. This is Beta-mannosyltransferase 2 (BMT2) from Komagataella phaffii (strain ATCC 76273 / CBS 7435 / CECT 11047 / NRRL Y-11430 / Wegner 21-1) (Yeast).